Here is a 312-residue protein sequence, read N- to C-terminus: uncharacterized protein (312 aa).

Positions 1 to 28 (MNSADTQEPKSFNHTDMWTAFGTTMSGA) are cleaved as a signal peptide.

The FAS-operon encodes genes involved in cytokinin production and in host plant fasciation (leafy gall). This is an uncharacterized protein from Rhodococcoides fascians (Rhodococcus fascians).